The following is a 349-amino-acid chain: Methionine import ATP-binding protein MetN (349 aa).

The region spanning isoleucine 5–valine 245 is the ABC transporter domain. Glycine 37–serine 44 contributes to the ATP binding site.

It belongs to the ABC transporter superfamily. Methionine importer (TC 3.A.1.24) family. In terms of assembly, the complex is composed of two ATP-binding proteins (MetN), two transmembrane proteins (MetI) and a solute-binding protein (MetQ).

The protein resides in the cell membrane. It carries out the reaction L-methionine(out) + ATP + H2O = L-methionine(in) + ADP + phosphate + H(+). The catalysed reaction is D-methionine(out) + ATP + H2O = D-methionine(in) + ADP + phosphate + H(+). Its function is as follows. Part of the ABC transporter complex MetNIQ involved in methionine import. Responsible for energy coupling to the transport system. This is Methionine import ATP-binding protein MetN from Lactobacillus johnsonii (strain CNCM I-12250 / La1 / NCC 533).